The following is an 86-amino-acid chain: Beta-mammal/insect toxin To1 (86 aa).

An N-terminal signal peptide occupies residues 1-20 (MTRFVLFISCFFLIDMIVEC). Residues 22–84 (KEGYLVGNDG…TWSSATNKCK (63 aa)) enclose the LCN-type CS-alpha/beta domain. Disulfide bonds link Cys32–Cys83, Cys36–Cys58, Cys44–Cys64, and Cys48–Cys66. Lys84 carries the lysine amide modification.

This sequence belongs to the long (4 C-C) scorpion toxin superfamily. Sodium channel inhibitor family. Beta subfamily. In terms of tissue distribution, expressed by the venom gland.

The protein localises to the secreted. Functionally, beta toxin that show multiple effects. It enhances the open probability at more negative potentials of human Nav1.3/SCN3A and Nav1.6/SCN8A, of the insect channel BgNaV1 and of arachnid VdNaV1 channel. It promotes an important shift in slow inactivation processes as a function of the prepulse voltage in human Nav1.3/SCN3A and Nav1.6/SCN8A and a small shift in Nav1.1/SCN1A, Nav1.2/SCN2A and Nav1.4/SCN4A. Finally, it reduces the peak of sodium currents in Nav1.3/SCN3A (80% inhibition at 70 nM of toxin), Nav1.6/SCN8A (55.3%), Nav1.1/SCN1A (53.3%), Nav1.5/SCN5A (46.7%), Nav1.2/SCN2A (42.7%) and Nav1.4/SCN4A (20%) voltage-gated sodium channels. It has also been shown to affect the sodium current permeability of rat cerebellum granular cells in a partially reversible manner. In vivo, an intraperitoneal injection (20 ug) into mice produces excitability, respiratory problems, convulsions and death, within the first 30 minutes after injection. In Tityus obscurus (Amazonian scorpion), this protein is Beta-mammal/insect toxin To1.